Reading from the N-terminus, the 488-residue chain is Proline--tRNA ligase (488 aa).

The protein belongs to the class-II aminoacyl-tRNA synthetase family. ProS type 3 subfamily. As to quaternary structure, homodimer.

The protein resides in the cytoplasm. It carries out the reaction tRNA(Pro) + L-proline + ATP = L-prolyl-tRNA(Pro) + AMP + diphosphate. Its function is as follows. Catalyzes the attachment of proline to tRNA(Pro) in a two-step reaction: proline is first activated by ATP to form Pro-AMP and then transferred to the acceptor end of tRNA(Pro). The sequence is that of Proline--tRNA ligase from Pyrobaculum arsenaticum (strain DSM 13514 / JCM 11321 / PZ6).